Reading from the N-terminus, the 557-residue chain is DNA ligase B (557 aa).

Catalysis depends on Lys125, which acts as the N6-AMP-lysine intermediate.

Belongs to the NAD-dependent DNA ligase family. LigB subfamily.

The enzyme catalyses NAD(+) + (deoxyribonucleotide)n-3'-hydroxyl + 5'-phospho-(deoxyribonucleotide)m = (deoxyribonucleotide)n+m + AMP + beta-nicotinamide D-nucleotide.. Functionally, catalyzes the formation of phosphodiester linkages between 5'-phosphoryl and 3'-hydroxyl groups in double-stranded DNA using NAD as a coenzyme and as the energy source for the reaction. The protein is DNA ligase B of Pseudomonas entomophila (strain L48).